The primary structure comprises 320 residues: Probable cell division protein WhiA (320 aa).

The segment at residues 282 to 315 is a DNA-binding region (H-T-H motif); sequence TLKELGEMLSPAIGKSGVNHRLRKIDEIATKLQE.

This sequence belongs to the WhiA family.

Its function is as follows. Involved in cell division and chromosome segregation. The protein is Probable cell division protein WhiA of Alkaliphilus oremlandii (strain OhILAs) (Clostridium oremlandii (strain OhILAs)).